The following is a 113-amino-acid chain: Putative pterin-4-alpha-carbinolamine dehydratase (113 aa).

This sequence belongs to the pterin-4-alpha-carbinolamine dehydratase family.

It catalyses the reaction (4aS,6R)-4a-hydroxy-L-erythro-5,6,7,8-tetrahydrobiopterin = (6R)-L-erythro-6,7-dihydrobiopterin + H2O. This is Putative pterin-4-alpha-carbinolamine dehydratase from Nitrosospira multiformis (strain ATCC 25196 / NCIMB 11849 / C 71).